The primary structure comprises 379 residues: MVESSNTKKVKVSSLCELCHGRKAVMKRPKNLRKLCKECFFHVFETEVHNTIVENKLFANVENSEFPERRAVAIGASGGKDSTVLASVMKTLNERYNYGLKLVLLCIDEGIKGYRDHSLETVKMNQKEYDMPLEILSYKDLYDWTMDEVVSCAGIRSSCTYCGVLRRQALDKGAEKLGINHIVTGHNADDMAETVLLNLLRGDINRIENSTKIITDSENSVIQRSKPFAYMSQKEIVLYAHYKNLTYFSTECTYSEEAFRGECRSLFHSLSAVLPSVHTNTIYSGQQFKRKAKAMKRQNNKNNKNNKNNMADEHEVLPNGTVAIKESKRCKKCGSLASNDLCQACFLLAGLEVSRAKVSIDSEGDGAAKLSKTLEGLTF.

This sequence belongs to the TtcA family. CTU1/NCS6/ATPBD3 subfamily.

The protein localises to the cytoplasm. It functions in the pathway tRNA modification; 5-methoxycarbonylmethyl-2-thiouridine-tRNA biosynthesis. In terms of biological role, plays a central role in 2-thiolation of mcm(5)S(2)U at tRNA wobble positions of tRNA(Lys), tRNA(Glu) and tRNA(Gln). Directly binds tRNAs and probably acts by catalyzing adenylation of tRNAs, an intermediate required for 2-thiolation. It is unclear whether it acts as a sulfurtransferase that transfers sulfur from thiocarboxylated URM1 onto the uridine of tRNAs at wobble position. Prior mcm(5) tRNA modification by the elongator complex is required for 2-thiolation. May also be involved in protein urmylation. This is Cytoplasmic tRNA 2-thiolation protein 1 from Lodderomyces elongisporus (strain ATCC 11503 / CBS 2605 / JCM 1781 / NBRC 1676 / NRRL YB-4239) (Yeast).